Here is a 254-residue protein sequence, read N- to C-terminus: Pimeloyl-[acyl-carrier protein] methyl ester esterase (254 aa).

An AB hydrolase-1 domain is found at 14 to 242; that stretch reads LVLLHGWGMN…ASHAPFISHP (229 aa). Substrate-binding positions include tryptophan 20, 82 to 83, and 143 to 147; these read SL and FLAIQ. The active-site Nucleophile is serine 82. Active-site residues include aspartate 207 and histidine 235. Histidine 235 contributes to the substrate binding site.

The protein belongs to the AB hydrolase superfamily. Carboxylesterase BioH family. As to quaternary structure, monomer.

It is found in the cytoplasm. The enzyme catalyses 6-carboxyhexanoyl-[ACP] methyl ester + H2O = 6-carboxyhexanoyl-[ACP] + methanol + H(+). Its pathway is cofactor biosynthesis; biotin biosynthesis. In terms of biological role, the physiological role of BioH is to remove the methyl group introduced by BioC when the pimeloyl moiety is complete. It allows to synthesize pimeloyl-ACP via the fatty acid synthetic pathway through the hydrolysis of the ester bonds of pimeloyl-ACP esters. This is Pimeloyl-[acyl-carrier protein] methyl ester esterase from Aeromonas hydrophila subsp. hydrophila (strain ATCC 7966 / DSM 30187 / BCRC 13018 / CCUG 14551 / JCM 1027 / KCTC 2358 / NCIMB 9240 / NCTC 8049).